The chain runs to 361 residues: Peptide chain release factor 1 (361 aa).

Gln235 is subject to N5-methylglutamine. The tract at residues 287-309 is disordered; sequence QKEASAMRSAQVGSGDRSERIRT.

This sequence belongs to the prokaryotic/mitochondrial release factor family. Methylated by PrmC. Methylation increases the termination efficiency of RF1.

The protein resides in the cytoplasm. Peptide chain release factor 1 directs the termination of translation in response to the peptide chain termination codons UAG and UAA. The sequence is that of Peptide chain release factor 1 from Chlamydia caviae (strain ATCC VR-813 / DSM 19441 / 03DC25 / GPIC) (Chlamydophila caviae).